A 185-amino-acid chain; its full sequence is Large ribosomal subunit protein uL16m (185 aa).

This sequence belongs to the universal ribosomal protein uL16 family.

The protein localises to the mitochondrion. The sequence is that of Large ribosomal subunit protein uL16m (RPL16) from Zea mays (Maize).